Reading from the N-terminus, the 238-residue chain is Large ribosomal subunit protein uL1 (238 aa).

This sequence belongs to the universal ribosomal protein uL1 family. Part of the 50S ribosomal subunit.

Its function is as follows. Binds directly to 23S rRNA. The L1 stalk is quite mobile in the ribosome, and is involved in E site tRNA release. Functionally, protein L1 is also a translational repressor protein, it controls the translation of the L11 operon by binding to its mRNA. The sequence is that of Large ribosomal subunit protein uL1 from Rippkaea orientalis (strain PCC 8801 / RF-1) (Cyanothece sp. (strain PCC 8801)).